Reading from the N-terminus, the 45-residue chain is DNA-directed RNA polymerase subunit Rpo12 (45 aa).

Residues C8, C23, and C26 each contribute to the Zn(2+) site.

It belongs to the archaeal Rpo12/eukaryotic RPC10 RNA polymerase subunit family. As to quaternary structure, part of the RNA polymerase complex. Zn(2+) is required as a cofactor.

It localises to the cytoplasm. It catalyses the reaction RNA(n) + a ribonucleoside 5'-triphosphate = RNA(n+1) + diphosphate. Functionally, DNA-dependent RNA polymerase (RNAP) catalyzes the transcription of DNA into RNA using the four ribonucleoside triphosphates as substrates. The sequence is that of DNA-directed RNA polymerase subunit Rpo12 from Methanosarcina acetivorans (strain ATCC 35395 / DSM 2834 / JCM 12185 / C2A).